A 677-amino-acid polypeptide reads, in one-letter code: MAKFRVRVSTGEACGAGTWDKVSVSIVGTHGESPLVPLDHLGKEFSAGAEEDFEVTLPQDVGTVLMLRIHKAPPEAPLPLLSFPPDAWYCRWFELEWLPGAALRFPCYQWLEGAGELVLREGAAKVSWQDHHRTLQDQRQKELESRKDMYSWKTYIEGWPHCLDHETVKDLDLNIKYSAMKNAKFFFKAQSAFTELKFKGLLDRTGLWRSLREMKRMFNFHNTPAAEYVFAHWQEDAFFASQFLNGLNPVLIRRCRRLPENFPVTDEMVAPVLGPGTSLQAELEKGSLFLVDHGILSGVQTNVINGKPQFSAAPMTLLYQSPGSGPLLPIAIQLKQTPGPDNPIFLPSDDKWDWLLAKTWVRNAEFSIHEALTHLLHAHLIPEVFALATLRQLPHCHPLFKLLIPHTRYTLHINTLARELLIAPGKVVDKSTGLGIGGFSDLIKRNMEQLSYSVLCLPEDIRARDVGDLPGYYYRDDGMQIWSAIRSFVSEIVDIYYPSDASVRDDQELQAWVGEIFSEGFLSQESSGMPSLLDTQEALVQYVTMVIFTCSAKHAAVSASQFDSCVWMPNLPPSMQLPPPTSKGQASPEGFIATLPAVNATCDVIIALWLLSKEPGDRRPLGHYPDEHFTEEVPRRSIAAFQRKLIQISSGIRKRNQSLALPYTYLDPPLIENSVSI.

Residues 2–125 form the PLAT domain; that stretch reads AKFRVRVSTG…ELVLREGAAK (124 aa). Residues G15, G17, D39, H40, G42, E44, D86, and A87 each coordinate Ca(2+). Residues 126-677 enclose the Lipoxygenase domain; that stretch reads VSWQDHHRTL…PPLIENSVSI (552 aa). Residues H374, H379, H554, and I677 each coordinate Fe cation.

This sequence belongs to the lipoxygenase family. It depends on Fe cation as a cofactor.

The protein localises to the cytoplasm. It is found in the cytosol. It localises to the cell membrane. Its subcellular location is the cytoskeleton. The protein resides in the membrane. The protein localises to the cell junction. It is found in the adherens junction. It localises to the focal adhesion. Its subcellular location is the nucleus. The catalysed reaction is (5Z,8Z,11Z,14Z)-eicosatetraenoate + O2 = (15S)-hydroperoxy-(5Z,8Z,11Z,13E)-eicosatetraenoate. It carries out the reaction (9Z,12Z)-octadecadienoate + O2 = 13-hydroperoxy-(9Z,11E)-octadecadienoate. It catalyses the reaction (5S)-hydroxy-(6E,8Z,11Z,14Z)-eicosatetraenoate + O2 = (5S)-hydroxy-(15S)-hydroperoxy-(6E,8Z,11Z,13E)-eicosatetraenoate. The enzyme catalyses (5Z,8Z,11Z,14Z)-eicosatetraenoate + O2 = 5-hydroperoxy-(6E,8Z,11Z,14Z)-eicosatetraenoate. The catalysed reaction is (5S,6R)-dihydroxy-(7E,9E,11Z,14Z)-eicosatetraenoate + O2 = (5S,6R)-dihydroxy-(15S)-hydroperoxy-(7E,9E,11Z,13E)-eicosatetraenoate. It carries out the reaction (5S)-hydroperoxy-(6E,8Z,11Z,14Z)-eicosatetraenoate + O2 = (5S,15S)-dihydroperoxy-(6E,8Z,11Z,13E)-eicosatetraenoate. It catalyses the reaction 2-(5Z,8Z,11Z,14Z-eicosatetraenoyl)-glycerol + O2 = 2-[15(S)-hydroperoxy-(5Z,8Z,11Z,13E)-eicosatetraenoyl]-glycerol. The enzyme catalyses (8S)-hydroperoxy-(5Z,9E,11Z,14Z)-eicosatetraenoate + O2 = (8S,15S)-dihydroperoxy-(5Z,9E,11Z,13E)-eicosatetraenoate. The catalysed reaction is N-(5Z,8Z,11Z,14Z)-eicosatetraenoyl-L-alanine + O2 = N-(15S)-hydroperoxy-(5Z,8Z,11Z,13E)-eicosatetraenoyl-alanine. It carries out the reaction N-(5Z,8Z,11Z,14Z)-eicosatetraenoyl-gamma-aminobutanoate + O2 = N-(15S)-hydroperoxy-(5Z,8Z,11Z,13E)-eicosatetraenoyl-gamma-aminobutanoate. It catalyses the reaction N-(5Z,8Z,11Z,14Z)-eicosatetraenoyl-glycine + O2 = N-(15S)-hydroperoxy-(5Z,8Z,11Z,13E)-eicosatetraenoyl-glycine. The enzyme catalyses N-(5Z,8Z,11Z,14Z)-eicosatetraenoyl-taurine + O2 = N-(15S)-hydroperoxy-(5Z,8Z,11Z,13E)-eicosatetraenoyl-taurine. The catalysed reaction is 2-(5Z,8Z,11Z,14Z-eicosatetraenoyl)-glycerol + O2 = 2-[12-hydroperoxy-(5Z,8Z,10E,14Z)-eicosatetraenoyl]-glycerol. It carries out the reaction 1-octadecanoyl-2-(5Z,8Z,11Z,14Z-eicosatetraenoyl)-sn-glycero-3-phosphocholine + O2 = 1-octadecanoyl-2-(15-hydroperoxy-5Z,8Z,11Z,13E-eicosatetraenoyl)-sn-glycero-3-phosphocholine. It catalyses the reaction a 1-acyl-2-(5Z,8Z,11Z,14Z-eicosatetraenoyl)-sn-glycero-3-phospho-(1D-myo-inositol) + O2 = a 1-acyl-2-(15-hydroperoxy-5Z,8Z,11Z,13E-eicosatetraenoyl)-sn-glycero-3-phospho-(1D-myo-inositol). The enzyme catalyses a 1-acyl-2-(8Z,11Z,14Z-eicosatrienoyl)-sn-glycero-3-phospho-(1D-myo-inositol) + O2 = a 1-acyl-2-(15-hydroperoxy-8Z,11Z,13E-eicosatrienoyl)-sn-glycero-3-phospho-(1D-myo-inositol). The catalysed reaction is 1-octadecanoyl-2-(5Z,8Z,11Z,14Z)-eicosatetraenoyl-sn-glycero-3-phosphoethanolamine + O2 = 1-octadecanoyl-2-(15-hydroperoxy-5Z,8Z,11Z,13E-eicosatetraenoyl)-sn-glycero-3-phosphoethanolamine. It carries out the reaction 1-octadecanoyl-2-(5Z,8Z,11Z,14Z-eicosatetraenoyl)-sn-glycero-3-phospho-(1D-myo-inositol) + O2 = 1-octadecanoyl-2-(15-hydroperoxy-5Z,8Z,11Z,13E-eicosatetraenoyl)-sn-glycero-3-phospho-(1D-myo-inositol). It catalyses the reaction (8Z,11Z,14Z)-eicosatrienoate + O2 = 15-hydroperoxy-(8Z,11Z,13E)-eicosatrienoate. The enzyme catalyses (7S)-hydroperoxy-(4Z,8E,10Z,13Z,16Z,19Z)-docosahexaenoate + O2 = (7S,17S)-dihydroperoxy-(4Z,8E,10Z,13Z,15E,19Z)-docosahexaenoate. Its pathway is lipid metabolism; hydroperoxy eicosatetraenoic acid biosynthesis. Non-heme iron-containing dioxygenase that catalyzes the stereo-specific peroxidation of free and esterified polyunsaturated fatty acids (PUFAs) generating a spectrum of bioactive lipid mediators. Inserts a peroxyl group at C15 of arachidonate ((5Z,8Z,11Z,14Z)-eicosatetraenoate) producing (15S)-hydroperoxyeicosatetraenoate/(15S)-HPETE. Also peroxidizes linoleate ((9Z,12Z)-octadecadienoate) to 13-hydroperoxyoctadecadienoate/13-HPODE. Oxygenates arachidonyl derivatives such as 2-arachidonoylglycerol (2-AG) leading to the production and extracellular release of 15-hydroxyeicosatetraenoyl glycerol (15-HETE-G) that acts as a peroxisome proliferator-activated receptor alpha agonist. Has the ability to efficiently class-switch ALOX5 pro-inflammatory mediators into anti-inflammatory intermediates. Participates in the sequential oxidations of DHA ((4Z,7Z,10Z,13Z,16Z,19Z)-docosahexaenoate) to generate specialized pro-resolving mediators (SPMs) resolvin D5 ((7S,17S)-diHPDHA), which can actively down-regulate the immune response and have anti-aggregation properties with platelets. In addition to free PUFAs hydrolyzed from phospholipids, it directly oxidizes PUFAs esterified to membrane-bound phospholipids. Has no detectable 8S-lipoxygenase activity on arachidonate but reacts with (8S)-HPETE to produce (8S,15S)-diHPETE. May regulate progression through the cell cycle and cell proliferation. May also regulate cytokine secretion by macrophages and therefore play a role in the immune response. May also regulate macrophage differentiation into proatherogenic foam cells. In Rattus norvegicus (Rat), this protein is Polyunsaturated fatty acid lipoxygenase ALOX15B.